The chain runs to 339 residues: NADH-quinone oxidoreductase subunit H (339 aa).

Transmembrane regions (helical) follow at residues 9–29 (IFPL…LILC), 50–70 (PNVV…KLLF), 82–102 (ILFI…WAVI), 115–135 (VGVL…IIAG), 161–181 (MGLV…SEII), 187–207 (MPWW…ISVL), 235–255 (MGFA…SAMT), 275–295 (IPGF…FLWI), and 311–331 (GWKV…SVLV).

This sequence belongs to the complex I subunit 1 family. As to quaternary structure, NDH-1 is composed of 14 different subunits. Subunits NuoA, H, J, K, L, M, N constitute the membrane sector of the complex.

Its subcellular location is the cell inner membrane. The catalysed reaction is a quinone + NADH + 5 H(+)(in) = a quinol + NAD(+) + 4 H(+)(out). NDH-1 shuttles electrons from NADH, via FMN and iron-sulfur (Fe-S) centers, to quinones in the respiratory chain. The immediate electron acceptor for the enzyme in this species is believed to be ubiquinone. Couples the redox reaction to proton translocation (for every two electrons transferred, four hydrogen ions are translocated across the cytoplasmic membrane), and thus conserves the redox energy in a proton gradient. This subunit may bind ubiquinone. This is NADH-quinone oxidoreductase subunit H from Rickettsia peacockii (strain Rustic).